A 456-amino-acid chain; its full sequence is UPF0496 protein 4 (456 aa).

Residues 195–217 traverse the membrane as a helical segment; that stretch reads VLMRALYGIESVTVFVCSIFVAV. Residues 368-390 form a disordered region; sequence QDSNVKQANGSSDESALVVPERT. The span at 371–381 shows a compositional bias: polar residues; that stretch reads NVKQANGSSDE.

The protein belongs to the ROH1 family.

It is found in the membrane. This is UPF0496 protein 4 from Oryza sativa subsp. japonica (Rice).